An 80-amino-acid polypeptide reads, in one-letter code: Ubiquinol-cytochrome c reductase complex assembly factor 5 (80 aa).

Residues 1–19 lie on the Mitochondrial matrix side of the membrane; that stretch reads MFSRAQVRRALQRVPGKQR. A helical transmembrane segment spans residues 20–41; it reads FGIYRFLPFFFVLGGAMEWIMI. Residues 42-80 are Mitochondrial intermembrane-facing; it reads KVRVGQETFYDVYRRKASERQYQRRLEDTSETNLHKLIK.

This sequence belongs to the UQCC5 family. Associates with the mitochondrial ribosome. Interacts with UQCC6. Interacts with MT-CYB; interacts with newly synthesizes MT-CYB. Forms a complex, named COMB/coordinator of mitochondrial CYTB biogenesis, composed of UQCC1, UQCC2, UQCC4, UQCC5 and UQCC6; stabilizes nascent cytochrome b/MT-CYB and promotes its membrane insertion.

The protein resides in the mitochondrion inner membrane. In terms of biological role, required for the assembly and stability of the mitochondrial ubiquinol-cytochrome c reductase complex (complex III (CIII) or cytochrome b-c1 complex), a multisubunit transmembrane complex that is part of the mitochondrial electron transport chain (ETC) which drives oxidative phosphorylation. Mediates early complex III biogenesis. Participates in regulating the levels of electron transport chain proteins, and therefore energy supply, in response to changes in energy demand. Also required for cytochrome c oxidase complex (complex IV) assembly. This is Ubiquinol-cytochrome c reductase complex assembly factor 5 from Mus musculus (Mouse).